The primary structure comprises 349 residues: D-arabinose 1-dehydrogenase (NADP(+)) (349 aa).

Zn(2+) contacts are provided by cysteine 46, histidine 70, aspartate 99, cysteine 102, cysteine 105, cysteine 113, and aspartate 155.

This sequence belongs to the zinc-containing alcohol dehydrogenase family. As to quaternary structure, homotetramer. Dimer of dimers. It depends on Zn(2+) as a cofactor.

It catalyses the reaction D-arabinose + NADP(+) = D-arabinono-1,4-lactone + NADPH + H(+). In terms of biological role, participates in a pentose oxidation pathway that converts D-arabinose to 2-oxoglutarate. Catalyzes the NADP-dependent conversion of D-arabinose to D-arabinono-1,4-lactone. In vitro, can also use L-fucose, L-galactose and D-ribose. Shows highest activity with L-fucose, in combinaison with NAD, and lower activity toward L-galactose and D-ribose. When acting on its physiological substrate, D-arabinose, shows a clear preference for NADP over NAD. The sequence is that of D-arabinose 1-dehydrogenase (NADP(+)) from Saccharolobus solfataricus (strain ATCC 35092 / DSM 1617 / JCM 11322 / P2) (Sulfolobus solfataricus).